The sequence spans 954 residues: Glycine dehydrogenase (decarboxylating) (954 aa).

Lys700 carries the N6-(pyridoxal phosphate)lysine modification.

This sequence belongs to the GcvP family. The glycine cleavage system is composed of four proteins: P, T, L and H. Pyridoxal 5'-phosphate is required as a cofactor.

The enzyme catalyses N(6)-[(R)-lipoyl]-L-lysyl-[glycine-cleavage complex H protein] + glycine + H(+) = N(6)-[(R)-S(8)-aminomethyldihydrolipoyl]-L-lysyl-[glycine-cleavage complex H protein] + CO2. The glycine cleavage system catalyzes the degradation of glycine. The P protein binds the alpha-amino group of glycine through its pyridoxal phosphate cofactor; CO(2) is released and the remaining methylamine moiety is then transferred to the lipoamide cofactor of the H protein. In Dinoroseobacter shibae (strain DSM 16493 / NCIMB 14021 / DFL 12), this protein is Glycine dehydrogenase (decarboxylating).